We begin with the raw amino-acid sequence, 475 residues long: Sulfate adenylyltransferase subunit 1 (475 aa).

Positions 25-239 (KSLLRFLTCG…EVLETVEIQR (215 aa)) constitute a tr-type G domain. The tract at residues 34 to 41 (GSVDDGKS) is G1. Position 34–41 (34–41 (GSVDDGKS)) interacts with GTP. The G2 stretch occupies residues 92–96 (GITID). Residues 113–116 (DTPG) are G3. Residues 113-117 (DTPGH) and 168-171 (NKMD) each bind GTP. The G4 stretch occupies residues 168–171 (NKMD). A G5 region spans residues 206–208 (SAL).

Belongs to the TRAFAC class translation factor GTPase superfamily. Classic translation factor GTPase family. CysN/NodQ subfamily. In terms of assembly, heterodimer composed of CysD, the smaller subunit, and CysN.

It catalyses the reaction sulfate + ATP + H(+) = adenosine 5'-phosphosulfate + diphosphate. It participates in sulfur metabolism; hydrogen sulfide biosynthesis; sulfite from sulfate: step 1/3. Functionally, with CysD forms the ATP sulfurylase (ATPS) that catalyzes the adenylation of sulfate producing adenosine 5'-phosphosulfate (APS) and diphosphate, the first enzymatic step in sulfur assimilation pathway. APS synthesis involves the formation of a high-energy phosphoric-sulfuric acid anhydride bond driven by GTP hydrolysis by CysN coupled to ATP hydrolysis by CysD. The sequence is that of Sulfate adenylyltransferase subunit 1 from Escherichia coli O9:H4 (strain HS).